The sequence spans 471 residues: Siroheme synthase (471 aa).

The interval 1–203 (MDYLPLFADI…GDWESAEKTL (203 aa)) is precorrin-2 dehydrogenase /sirohydrochlorin ferrochelatase. Residues 22–23 (EV) and 43–44 (KN) contribute to the NAD(+) site. Serine 128 is modified (phosphoserine). Residues 215–471 (GEIILVGAGP…DTKSSLINLA (257 aa)) form a uroporphyrinogen-III C-methyltransferase region. Proline 224 contributes to the S-adenosyl-L-methionine binding site. The Proton acceptor role is filled by aspartate 247. Catalysis depends on lysine 269, which acts as the Proton donor. S-adenosyl-L-methionine is bound by residues 300–302 (GGD), isoleucine 305, 330–331 (TA), methionine 382, and alanine 411.

In the N-terminal section; belongs to the precorrin-2 dehydrogenase / sirohydrochlorin ferrochelatase family. It in the C-terminal section; belongs to the precorrin methyltransferase family.

It catalyses the reaction uroporphyrinogen III + 2 S-adenosyl-L-methionine = precorrin-2 + 2 S-adenosyl-L-homocysteine + H(+). The catalysed reaction is precorrin-2 + NAD(+) = sirohydrochlorin + NADH + 2 H(+). The enzyme catalyses siroheme + 2 H(+) = sirohydrochlorin + Fe(2+). It participates in cofactor biosynthesis; adenosylcobalamin biosynthesis; precorrin-2 from uroporphyrinogen III: step 1/1. Its pathway is cofactor biosynthesis; adenosylcobalamin biosynthesis; sirohydrochlorin from precorrin-2: step 1/1. The protein operates within porphyrin-containing compound metabolism; siroheme biosynthesis; precorrin-2 from uroporphyrinogen III: step 1/1. It functions in the pathway porphyrin-containing compound metabolism; siroheme biosynthesis; siroheme from sirohydrochlorin: step 1/1. It participates in porphyrin-containing compound metabolism; siroheme biosynthesis; sirohydrochlorin from precorrin-2: step 1/1. Multifunctional enzyme that catalyzes the SAM-dependent methylations of uroporphyrinogen III at position C-2 and C-7 to form precorrin-2 via precorrin-1. Then it catalyzes the NAD-dependent ring dehydrogenation of precorrin-2 to yield sirohydrochlorin. Finally, it catalyzes the ferrochelation of sirohydrochlorin to yield siroheme. In Zymomonas mobilis subsp. mobilis (strain ATCC 31821 / ZM4 / CP4), this protein is Siroheme synthase.